A 521-amino-acid chain; its full sequence is Type-1 glutamine synthetase 2 (521 aa).

In terms of domain architecture, GS beta-grasp spans 76 to 176 (NQIKISKSPF…FLMDFIGTNG (101 aa)). The GS catalytic domain occupies 183–521 (PRSTLKKVIK…WELERYLEII (339 aa)).

Belongs to the glutamine synthetase family.

The enzyme catalyses L-glutamate + NH4(+) + ATP = L-glutamine + ADP + phosphate + H(+). The protein is Type-1 glutamine synthetase 2 (glnA2) of Dictyostelium discoideum (Social amoeba).